A 790-amino-acid polypeptide reads, in one-letter code: Penicillin-binding protein 1A (790 aa).

Over 1–20 (MANVRKRRKKKNEHKALRLT) the chain is Cytoplasmic. Residues 21 to 41 (FITLLMVFLFSCVAAAGVGLA) traverse the membrane as a helical; Signal-anchor for type II membrane protein segment. Residues 42–790 (MIKAAPPLDV…RKRKMIKPQI (749 aa)) lie on the Extracellular side of the membrane. Positions 61–230 (SVIYDDKNKL…PQSPSTFYNA (170 aa)) are transglycosylase. The Proton donor; for transglycosylase activity role is filled by E100. Residues 363-656 (ASVSIVDYKT…AALIWKLIMG (294 aa)) are transpeptidase. The active-site Acyl-ester intermediate; for transpeptidase activity is S402. The disordered stretch occupies residues 720–790 (NKDKDDDDDD…RKRKMIKPQI (71 aa)). A compositionally biased stretch (acidic residues) spans 724–740 (DDDDDDKDKDKEDEEEN). A compositionally biased stretch (basic and acidic residues) spans 741–779 (KDEKNEDKKEAKDNTKNKDKDKKKDNDRKIDMDKKPDSS). Residues 780-790 (KRKRKMIKPQI) are compositionally biased toward basic residues.

This sequence in the N-terminal section; belongs to the glycosyltransferase 51 family. It in the C-terminal section; belongs to the transpeptidase family.

The protein resides in the cell membrane. It carries out the reaction [GlcNAc-(1-&gt;4)-Mur2Ac(oyl-L-Ala-gamma-D-Glu-L-Lys-D-Ala-D-Ala)](n)-di-trans,octa-cis-undecaprenyl diphosphate + beta-D-GlcNAc-(1-&gt;4)-Mur2Ac(oyl-L-Ala-gamma-D-Glu-L-Lys-D-Ala-D-Ala)-di-trans,octa-cis-undecaprenyl diphosphate = [GlcNAc-(1-&gt;4)-Mur2Ac(oyl-L-Ala-gamma-D-Glu-L-Lys-D-Ala-D-Ala)](n+1)-di-trans,octa-cis-undecaprenyl diphosphate + di-trans,octa-cis-undecaprenyl diphosphate + H(+). The catalysed reaction is Preferential cleavage: (Ac)2-L-Lys-D-Ala-|-D-Ala. Also transpeptidation of peptidyl-alanyl moieties that are N-acyl substituents of D-alanine.. It functions in the pathway cell wall biogenesis; peptidoglycan biosynthesis. Its function is as follows. Cell wall formation. Synthesis of cross-linked peptidoglycan from the lipid intermediates. The enzyme has a penicillin-insensitive transglycosylase N-terminal domain (formation of linear glycan strands) and a penicillin-sensitive transpeptidase C-terminal domain (cross-linking of the peptide subunits). In Clostridium tetani (strain Massachusetts / E88), this protein is Penicillin-binding protein 1A (pbpA).